A 1382-amino-acid polypeptide reads, in one-letter code: ATP-dependent RNA helicase TDRD9 (1382 aa).

Residues 36-62 (AAREEVQRQDVAPGAGPAAQAPALAQA) form a disordered region. Low complexity predominate over residues 47 to 62 (APGAGPAAQAPALAQA). Residues 142-308 (VSLIESNSVV…FAVPVQNKMN (167 aa)) enclose the Helicase ATP-binding domain. 155 to 162 (GATGSGKS) contributes to the ATP binding site. Residues 254–257 (DEVH) carry the DEAH box motif. The region spanning 377-544 (SGAQFVLERS…ILKVKLLDMG (168 aa)) is the Helicase C-terminal domain. One can recognise a Tudor domain in the interval 944 to 1004 (HPHPDLVCLA…MEIPCQFLEL (61 aa)).

Belongs to the DEAD box helicase family. DEAH subfamily. In terms of assembly, interacts with piRNA-associated proteins PIWIL1 and PIWIL4.

Its subcellular location is the cytoplasm. The protein localises to the nucleus. It carries out the reaction ATP + H2O = ADP + phosphate + H(+). In terms of biological role, ATP-binding RNA helicase required during spermatogenesis. Required to repress transposable elements and prevent their mobilization, which is essential for the germline integrity. Acts via the piRNA metabolic process, which mediates the repression of transposable elements during meiosis by forming complexes composed of piRNAs and Piwi proteins and governs the methylation and subsequent repression of transposons. Acts downstream of piRNA biogenesis: exclusively required for transposon silencing in the nucleus, suggesting that it acts as a nuclear effector in the nucleus together with PIWIL4. The polypeptide is ATP-dependent RNA helicase TDRD9 (Homo sapiens (Human)).